The following is a 289-amino-acid chain: E3 ubiquitin-protein ligase MARCHF8 (289 aa).

The interval 1-68 (MNMPLHQISA…SAPVSSFPRT (68 aa)) is disordered. Residues 25–39 (KTKEKEREEQNEKTL) show a composition bias toward basic and acidic residues. Residues 50–64 (SKAGGSSVASAPVSS) show a composition bias toward low complexity. An RING-CH-type zinc finger spans residues 70 to 131 (VTPSNQDICR…ELCKYEFIME (62 aa)). The Zn(2+) site is built by cysteine 78, cysteine 81, cysteine 95, cysteine 97, histidine 105, cysteine 108, cysteine 121, and cysteine 124. A run of 2 helical transmembrane segments spans residues 155–175 (CSVT…YVLI) and 195–215 (FWTK…FMYV).

Interacts with CD86.

Its subcellular location is the golgi apparatus membrane. It localises to the endoplasmic reticulum membrane. The protein resides in the cytoplasmic vesicle membrane. The protein localises to the lysosome membrane. It is found in the early endosome membrane. The enzyme catalyses S-ubiquitinyl-[E2 ubiquitin-conjugating enzyme]-L-cysteine + [acceptor protein]-L-lysine = [E2 ubiquitin-conjugating enzyme]-L-cysteine + N(6)-ubiquitinyl-[acceptor protein]-L-lysine.. It functions in the pathway protein modification; protein ubiquitination. Functionally, E3 ubiquitin-protein ligase that plays several important roles in innate immunity and adaptive immunity. Mediates ubiquitination of CD86 and MHC class II proteins, such as HLA-DR alpha and beta, and promotes their subsequent endocytosis and sorting to lysosomes via multivesicular bodies. Possesses a very broad antiviral activity by specifically inactivating different viral fusion proteins. Targets and ubiquitinates cytoplasmic lysine residues of viral envelope glycoproteins with single transmembrane domains leading to their lysosomal degradation. Mediates the regulation of constitutive ubiquitination and trafficking of the viral restriction factor BST2 within the endocytic pathway. Plays a role in maintenance of immune tolerance to self by promoting the turnover and proteasomal degradation of PD-L1/CD274 via ubiquitination. Catalyzes the 'Lys-63'-linked polyubiquitylation of cGAS thereby inhibiting its DNA binding ability and impairing its antiviral innate immunity. Negatively regulates IL7-mediated T-cell homeostasis by mediating 'Lys-27'-linked polyubiquitination of IL7R, leading to its lysosomal degradation. This Bos taurus (Bovine) protein is E3 ubiquitin-protein ligase MARCHF8 (MARCHF8).